The following is a 303-amino-acid chain: Glutamyl-Q tRNA(Asp) synthetase (303 aa).

Residues arginine 16–serine 20 and glutamate 52 each bind L-glutamate. Positions proline 19–serine 29 match the 'HIGH' region motif. Zn(2+)-binding residues include cysteine 108, cysteine 110, tyrosine 122, and cysteine 126. Residues tyrosine 177 and arginine 195 each contribute to the L-glutamate site. The short motif at lysine 233–glutamine 237 is the 'KMSKS' region element. Lysine 236 contacts ATP.

This sequence belongs to the class-I aminoacyl-tRNA synthetase family. GluQ subfamily. It depends on Zn(2+) as a cofactor.

Its function is as follows. Catalyzes the tRNA-independent activation of glutamate in presence of ATP and the subsequent transfer of glutamate onto a tRNA(Asp). Glutamate is transferred on the 2-amino-5-(4,5-dihydroxy-2-cyclopenten-1-yl) moiety of the queuosine in the wobble position of the QUC anticodon. This Vibrio vulnificus (strain CMCP6) protein is Glutamyl-Q tRNA(Asp) synthetase.